We begin with the raw amino-acid sequence, 291 residues long: ATP synthase gamma chain (291 aa).

The protein belongs to the ATPase gamma chain family. In terms of assembly, F-type ATPases have 2 components, CF(1) - the catalytic core - and CF(0) - the membrane proton channel. CF(1) has five subunits: alpha(3), beta(3), gamma(1), delta(1), epsilon(1). CF(0) has three main subunits: a, b and c.

The protein localises to the cell membrane. Produces ATP from ADP in the presence of a proton gradient across the membrane. The gamma chain is believed to be important in regulating ATPase activity and the flow of protons through the CF(0) complex. The polypeptide is ATP synthase gamma chain (Streptococcus pyogenes serotype M1).